Reading from the N-terminus, the 283-residue chain is Glutamate racemase (283 aa).

Substrate contacts are provided by residues 28–29 (DS) and 60–61 (YG). The Proton donor/acceptor role is filled by Cys92. 93–94 (NT) lines the substrate pocket. Cys204 serves as the catalytic Proton donor/acceptor. 205 to 206 (TH) is a substrate binding site.

The protein belongs to the aspartate/glutamate racemases family.

The catalysed reaction is L-glutamate = D-glutamate. Its pathway is cell wall biogenesis; peptidoglycan biosynthesis. Provides the (R)-glutamate required for cell wall biosynthesis. The polypeptide is Glutamate racemase (Salmonella gallinarum (strain 287/91 / NCTC 13346)).